We begin with the raw amino-acid sequence, 294 residues long: 4-hydroxy-tetrahydrodipicolinate synthase (294 aa).

Thr-47 contributes to the pyruvate binding site. Tyr-135 functions as the Proton donor/acceptor in the catalytic mechanism. The Schiff-base intermediate with substrate role is filled by Lys-163. Residue Ile-206 participates in pyruvate binding.

It belongs to the DapA family. In terms of assembly, homodimer.

Its subcellular location is the cytoplasm. It carries out the reaction L-aspartate 4-semialdehyde + pyruvate = (2S,4S)-4-hydroxy-2,3,4,5-tetrahydrodipicolinate + H2O + H(+). It participates in amino-acid biosynthesis; L-lysine biosynthesis via DAP pathway; (S)-tetrahydrodipicolinate from L-aspartate: step 3/4. In terms of biological role, catalyzes the condensation of (S)-aspartate-beta-semialdehyde [(S)-ASA] and pyruvate to 4-hydroxy-tetrahydrodipicolinate (HTPA). The polypeptide is 4-hydroxy-tetrahydrodipicolinate synthase (Staphylococcus haemolyticus (strain JCSC1435)).